The primary structure comprises 138 residues: Transcription antitermination protein NusB (138 aa).

This sequence belongs to the NusB family.

Functionally, involved in transcription antitermination. Required for transcription of ribosomal RNA (rRNA) genes. Binds specifically to the boxA antiterminator sequence of the ribosomal RNA (rrn) operons. The sequence is that of Transcription antitermination protein NusB from Geobacter sulfurreducens (strain ATCC 51573 / DSM 12127 / PCA).